Here is a 483-residue protein sequence, read N- to C-terminus: UDP-N-acetylmuramate--L-alanine ligase (483 aa).

ATP is bound at residue 122–128 (GSHGKTT).

The protein belongs to the MurCDEF family.

The protein localises to the cytoplasm. It catalyses the reaction UDP-N-acetyl-alpha-D-muramate + L-alanine + ATP = UDP-N-acetyl-alpha-D-muramoyl-L-alanine + ADP + phosphate + H(+). It functions in the pathway cell wall biogenesis; peptidoglycan biosynthesis. Its function is as follows. Cell wall formation. The polypeptide is UDP-N-acetylmuramate--L-alanine ligase (Synechococcus sp. (strain CC9311)).